A 481-amino-acid polypeptide reads, in one-letter code: UDP-N-acetylmuramoyl-L-alanyl-D-glutamate--L-lysine ligase (481 aa).

UDP-N-acetyl-alpha-D-muramoyl-L-alanyl-D-glutamate is bound at residue Ser42. Residue 118–124 (GTKGKTT) participates in ATP binding. Residues 160–161 (TT), Ser187, and Arg195 contribute to the UDP-N-acetyl-alpha-D-muramoyl-L-alanyl-D-glutamate site. The residue at position 229 (Lys229) is an N6-carboxylysine. An L-lysine recognition motif motif is present at residues 404 to 407 (DDPN).

Belongs to the MurCDEF family. MurE subfamily. Post-translationally, carboxylation is probably crucial for Mg(2+) binding and, consequently, for the gamma-phosphate positioning of ATP.

The protein resides in the cytoplasm. The catalysed reaction is UDP-N-acetyl-alpha-D-muramoyl-L-alanyl-D-glutamate + L-lysine + ATP = UDP-N-acetyl-alpha-D-muramoyl-L-alanyl-gamma-D-glutamyl-L-lysine + ADP + phosphate + H(+). Its pathway is cell wall biogenesis; peptidoglycan biosynthesis. Catalyzes the addition of L-lysine to the nucleotide precursor UDP-N-acetylmuramoyl-L-alanyl-D-glutamate (UMAG) in the biosynthesis of bacterial cell-wall peptidoglycan. The polypeptide is UDP-N-acetylmuramoyl-L-alanyl-D-glutamate--L-lysine ligase (Streptococcus pneumoniae (strain ATCC BAA-255 / R6)).